Consider the following 170-residue polypeptide: Thioredoxin-like protein YneN (170 aa).

The chain crosses the membrane as a helical span at residues 5-23 (WLAGILLIMLVGYTGWNLY). A Thioredoxin domain is found at 33 to 170 (IQEGQQAPDF…KEMEQKLDLD (138 aa)). A disulfide bond links Cys71 and Cys74.

The protein belongs to the thioredoxin family.

The protein localises to the cell membrane. The polypeptide is Thioredoxin-like protein YneN (yneN) (Bacillus subtilis (strain 168)).